Consider the following 405-residue polypeptide: Envelope glycoprotein M (405 aa).

Topologically, residues 1-17 (MKSSKNDTFVYRTWFKT) are intravirion. A helical membrane pass occupies residues 18–38 (LVVYFVMFVMSAVVPITAMFP). The Virion surface portion of the chain corresponds to 39–76 (NLGYPCYFNALVDYGALNLTNYNLAHHLTPTLYLEPPE). A helical transmembrane segment spans residues 77–97 (MFVYITLVFIADCVAFIYYAC). Over 98 to 121 (GEVALIKARKKVSGLTDLSAWVSA) the chain is Intravirion. A helical transmembrane segment spans residues 122-142 (VGSPTVLFLAILKLWSIQVFI). The Virion surface segment spans residues 143 to 149 (QVLSYKH). A helical transmembrane segment spans residues 150–170 (VFLSAFVYFLHFLASVLHACA). Residues 171–192 (CVTRFSPVWVVKAQDNSIPQDT) lie on the Intravirion side of the membrane. The chain crosses the membrane as a helical span at residues 193–215 (FLWWVVFYLKPIVTNLYLGCLAL). The Virion surface segment spans residues 216 to 245 (ETLVFSLSVFLALGNSFYFMVGDMVLGAVN). Residues 246-266 (LFLVLPIFWYILTEVWLASFL) form a helical membrane-spanning segment. A topological domain (intravirion) is located at residue Arg-267. A helical transmembrane segment spans residues 268–288 (HNFGFYCGMFIASIILILPLV). Topologically, residues 289–299 (RYEAVFVSAKL) are virion surface. The chain crosses the membrane as a helical span at residues 300-320 (HTTVAINVAIIPILCSVAMLI). At 321–405 (RICRIFKSMR…TTDSEEEIFP (85 aa)) the chain is on the intravirion side. The segment at 346 to 405 (LESEPRPRPSRTPSPGRNRRRSSTSSSSSRSTRRQRPVSTQALISSVLPMTTDSEEEIFP) is disordered. Residues 386–397 (QALISSVLPMTT) show a composition bias toward polar residues.

Belongs to the herpesviridae glycoprotein M family. Interacts (via N-terminus) with gN (via N-terminus). The gM-gN heterodimer forms the gCII complex.

The protein localises to the virion membrane. The protein resides in the host Golgi apparatus. It localises to the host trans-Golgi network. It is found in the host endosome membrane. Its subcellular location is the host nucleus inner membrane. Its function is as follows. Envelope glycoprotein important for virion assembly and egress. Plays a role in the correct incorporation of gH-gL into virion membrane. Directs the glycoprotein N (gN) to the host trans-Golgi network. The polypeptide is Envelope glycoprotein M (Homo sapiens (Human)).